A 274-amino-acid chain; its full sequence is 2,3,4,5-tetrahydropyridine-2,6-dicarboxylate N-succinyltransferase (274 aa).

It belongs to the transferase hexapeptide repeat family.

Its subcellular location is the cytoplasm. The catalysed reaction is (S)-2,3,4,5-tetrahydrodipicolinate + succinyl-CoA + H2O = (S)-2-succinylamino-6-oxoheptanedioate + CoA. Its pathway is amino-acid biosynthesis; L-lysine biosynthesis via DAP pathway; LL-2,6-diaminopimelate from (S)-tetrahydrodipicolinate (succinylase route): step 1/3. The chain is 2,3,4,5-tetrahydropyridine-2,6-dicarboxylate N-succinyltransferase from Alteromonas mediterranea (strain DSM 17117 / CIP 110805 / LMG 28347 / Deep ecotype).